The chain runs to 655 residues: THO complex subunit 1 (655 aa).

Disordered stretches follow at residues 403–427 (ERPA…LGKG) and 539–574 (PSEE…AVTN). A Nuclear localization signal motif is present at residues 415–431 (RKRQAPEDFLGKGPDRK). Positions 418–427 (QAPEDFLGKG) are enriched in basic and acidic residues. The segment covering 563–574 (DSPSIQSKAVTN) has biased composition (polar residues). Residues 573-655 (TNSQMDEIAA…NNIADNLSET (83 aa)) enclose the Death domain.

As to quaternary structure, component of the THO complex. In terms of tissue distribution, expressed in the developing neuromast.

Its subcellular location is the nucleus. It is found in the nucleoplasm. It localises to the nucleus matrix. The protein localises to the cytoplasm. The protein resides in the cytosol. Component of the THO subcomplex of the TREX complex which is thought to couple mRNA transcription, processing and nuclear export, and which specifically associates with spliced mRNA and not with unspliced pre-mRNA. Required for efficient export of polyadenylated RNA. The THOC1-THOC2-THOC3 core complex alone is sufficient to bind export factor NXF1-NXT1 and promote ATPase activity of DDX39B. TREX is recruited to spliced mRNAs by a transcription-independent mechanism, binds to mRNA upstream of the exon-junction complex (EJC) and is recruited in a splicing- and cap-dependent manner to a region near the 5' end of the mRNA where it functions in mRNA export to the cytoplasm via the TAP/NXF1 pathway. Regulates transcriptional elongation of a subset of genes. Involved in genome stability by preventing co-transcriptional R-loop formation. May play a role in hair cell formation, hence may be involved in hearing. In terms of biological role, participates in an apoptotic pathway which is characterized by activation of caspase-6, increases in the expression of BAK1 and BCL2L1 and activation of NF-kappa-B. This pathway does not require p53/TP53, nor does the presence of p53/TP53 affect the efficiency of cell killing. Activates a G2/M cell cycle checkpoint prior to the onset of apoptosis. Apoptosis is inhibited by association with RB1. Essential for early embryonic development. Required for normal gene expression during postnatal testis development. The polypeptide is THO complex subunit 1 (thoc1) (Danio rerio (Zebrafish)).